The following is a 545-amino-acid chain: CTP synthase (545 aa).

An amidoligase domain region spans residues 1 to 266 (MTTRYIFVTG…DELVVKRFGI (266 aa)). Serine 14 lines the CTP pocket. Serine 14 serves as a coordination point for UTP. Residues 15-20 (SLGKGI) and aspartate 72 each bind ATP. Positions 72 and 140 each coordinate Mg(2+). CTP is bound by residues 147–149 (DIE), 187–192 (KTKPTQ), and lysine 223. UTP-binding positions include 187-192 (KTKPTQ) and lysine 223. 239-241 (KDV) contributes to the ATP binding site. Positions 291-542 (TIGMVGKYIE…VAAATAYQKR (252 aa)) constitute a Glutamine amidotransferase type-1 domain. L-glutamine is bound at residue glycine 352. Catalysis depends on cysteine 379, which acts as the Nucleophile; for glutamine hydrolysis. L-glutamine-binding positions include 380–383 (LGLQ), glutamate 403, and arginine 470. Catalysis depends on residues histidine 515 and glutamate 517.

This sequence belongs to the CTP synthase family. Homotetramer.

It carries out the reaction UTP + L-glutamine + ATP + H2O = CTP + L-glutamate + ADP + phosphate + 2 H(+). The enzyme catalyses L-glutamine + H2O = L-glutamate + NH4(+). It catalyses the reaction UTP + NH4(+) + ATP = CTP + ADP + phosphate + 2 H(+). Its pathway is pyrimidine metabolism; CTP biosynthesis via de novo pathway; CTP from UDP: step 2/2. Allosterically activated by GTP, when glutamine is the substrate; GTP has no effect on the reaction when ammonia is the substrate. The allosteric effector GTP functions by stabilizing the protein conformation that binds the tetrahedral intermediate(s) formed during glutamine hydrolysis. Inhibited by the product CTP, via allosteric rather than competitive inhibition. Its function is as follows. Catalyzes the ATP-dependent amination of UTP to CTP with either L-glutamine or ammonia as the source of nitrogen. Regulates intracellular CTP levels through interactions with the four ribonucleotide triphosphates. This Shewanella sediminis (strain HAW-EB3) protein is CTP synthase.